A 388-amino-acid chain; its full sequence is Formate-dependent phosphoribosylglycinamide formyltransferase (388 aa).

N(1)-(5-phospho-beta-D-ribosyl)glycinamide is bound by residues 20–21 (EL) and E80. ATP-binding positions include R112, K153, 158–163 (SSGKGQ), 193–196 (EEFI), and E201. The region spanning 117–306 (RLAFEKLGLR…EFEIHARAIL (190 aa)) is the ATP-grasp domain. Residues E265 and E277 each contribute to the Mg(2+) site. Residues D284, K352, and 359–360 (RR) contribute to the N(1)-(5-phospho-beta-D-ribosyl)glycinamide site.

This sequence belongs to the PurK/PurT family. As to quaternary structure, homodimer.

It catalyses the reaction N(1)-(5-phospho-beta-D-ribosyl)glycinamide + formate + ATP = N(2)-formyl-N(1)-(5-phospho-beta-D-ribosyl)glycinamide + ADP + phosphate + H(+). Its pathway is purine metabolism; IMP biosynthesis via de novo pathway; N(2)-formyl-N(1)-(5-phospho-D-ribosyl)glycinamide from N(1)-(5-phospho-D-ribosyl)glycinamide (formate route): step 1/1. Its function is as follows. Involved in the de novo purine biosynthesis. Catalyzes the transfer of formate to 5-phospho-ribosyl-glycinamide (GAR), producing 5-phospho-ribosyl-N-formylglycinamide (FGAR). Formate is provided by PurU via hydrolysis of 10-formyl-tetrahydrofolate. The protein is Formate-dependent phosphoribosylglycinamide formyltransferase of Methanococcus maripaludis (strain C5 / ATCC BAA-1333).